Consider the following 78-residue polypeptide: Major outer membrane lipoprotein Lpp (78 aa).

An N-terminal signal peptide occupies residues M1–G20. A lipid anchor (N-palmitoyl cysteine) is attached at C21. C21 is lipidated: S-diacylglycerol cysteine. Residues S22–S75 are a coiled coil. 2 repeats span residues N24–V34 and N38–V48. An N6-murein peptidoglycan lysine modification is found at K78.

The protein belongs to the Lpp family. As to quaternary structure, homotrimer.

The protein localises to the cell outer membrane. Its subcellular location is the secreted. The protein resides in the cell wall. A highly abundant outer membrane lipoprotein that controls the distance between the inner and outer membranes. The only protein known to be covalently linked to the peptidoglycan network (PGN). Also non-covalently binds the PGN. The link between the cell outer membrane and PGN contributes to maintenance of the structural and functional integrity of the cell envelope, and maintains the correct distance between the PGN and the outer membrane. In Erwinia amylovora (Fire blight bacteria), this protein is Major outer membrane lipoprotein Lpp.